Here is a 460-residue protein sequence, read N- to C-terminus: 4-O-methyl-glucuronoyl methylesterase (460 aa).

The signal sequence occupies residues 1–17; sequence MASRFFALLLLAIPIQA. Gln-18 is subject to Pyrrolidone carboxylic acid. Residues 18 to 53 enclose the CBM1 domain; it reads QSPVWGQCGGIGWSGPTTCVGGATCVSYNPYYSQCI. 3 disulfides stabilise this stretch: Cys-96-Cys-131, Cys-277-Cys-412, and Cys-309-Cys-384. Residues 276–281 carry the GXSYXG catalytic site motif motif; sequence GCSRNG. Ser-278 serves as the catalytic Nucleophile. The substrate site is built by Lys-282, Gln-324, Glu-332, and Trp-375. His-411 functions as the Proton donor/acceptor in the catalytic mechanism. An N-linked (GlcNAc...) asparagine glycan is attached at Asn-447.

This sequence belongs to the carbohydrate esterase 15 (CE15) family.

The protein resides in the secreted. The enzyme catalyses a 4-O-methyl-alpha-D-glucuronosyl ester derivative + H2O = 4-O-methyl-alpha-D-glucuronate derivative + an alcohol + H(+). Functionally, glucuronoyl esterase which may play a significant role in biomass degradation, as it is considered to disconnect hemicellulose from lignin through the hydrolysis of the ester bond between 4-O-methyl-D-glucuronic acid residues of glucuronoxylans and aromatic alcohols of lignin. Does not hydrolyze substrates of other carbohydrate esterases such as acetylxylan esterase, acetyl esterase and feruloyl esterase. This is 4-O-methyl-glucuronoyl methylesterase from Hypocrea jecorina (strain QM6a) (Trichoderma reesei).